Reading from the N-terminus, the 117-residue chain is Holo-[acyl-carrier-protein] synthase (117 aa).

The Mg(2+) site is built by Asp-8 and Glu-55.

It belongs to the P-Pant transferase superfamily. AcpS family. Requires Mg(2+) as cofactor.

It is found in the cytoplasm. The enzyme catalyses apo-[ACP] + CoA = holo-[ACP] + adenosine 3',5'-bisphosphate + H(+). Transfers the 4'-phosphopantetheine moiety from coenzyme A to a Ser of acyl-carrier-protein. The polypeptide is Holo-[acyl-carrier-protein] synthase (Finegoldia magna (strain ATCC 29328 / DSM 20472 / WAL 2508) (Peptostreptococcus magnus)).